A 132-amino-acid chain; its full sequence is Agouti-signaling protein (132 aa).

The signal sequence occupies residues 1-22 (MDVTRLLLATLLVFLCFFTVYS). A glycan (N-linked (GlcNAc...) asparagine) is linked at Asn39. The segment at 62-93 (ISRKEAEKKRSSKKEASMKKVAQPRTPLSAPC) is disordered. Over residues 63–79 (SRKEAEKKRSSKKEASM) the composition is skewed to basic and acidic residues. 5 disulfide bridges follow: Cys93/Cys108, Cys100/Cys114, Cys107/Cys125, Cys111/Cys132, and Cys116/Cys123. Positions 93 to 132 (CVATRDSCKPPAPACCDPCASCQCRFFRSACSCRVLSLNC) constitute an Agouti domain.

The protein resides in the secreted. Functionally, involved in the regulation of melanogenesis. The binding of ASP to MC1R precludes alpha-MSH initiated signaling and thus blocks production of cAMP, leading to a down-regulation of eumelanogenesis (brown/black pigment) and thus increasing synthesis of pheomelanin (yellow/red pigment). This is Agouti-signaling protein (ASIP) from Trachypithecus auratus (Javan langur).